The sequence spans 265 residues: Phosphonates import ATP-binding protein PhnC 1 (265 aa).

Residues Ile7–Ala252 form the ABC transporter domain. Residue Gly39–Ser46 participates in ATP binding.

This sequence belongs to the ABC transporter superfamily. Phosphonates importer (TC 3.A.1.9.1) family. As to quaternary structure, the complex is composed of two ATP-binding proteins (PhnC), two transmembrane proteins (PhnE) and a solute-binding protein (PhnD).

The protein resides in the cell inner membrane. The enzyme catalyses phosphonate(out) + ATP + H2O = phosphonate(in) + ADP + phosphate + H(+). Its function is as follows. Part of the ABC transporter complex PhnCDE involved in phosphonates import. Responsible for energy coupling to the transport system. The polypeptide is Phosphonates import ATP-binding protein PhnC 1 (Nostoc sp. (strain PCC 7120 / SAG 25.82 / UTEX 2576)).